The sequence spans 686 residues: Antigen peptide transporter 2 (686 aa).

At 1 to 6 (MRLPDL) the chain is on the lumenal side. Residues 7–27 (RPWTSLLLVDAALLWLLQGPL) form a helical membrane-spanning segment. Residues 28–56 (GTLLPQGLPGLWLEGTLRLGGLWGLLKLR) lie on the Cytoplasmic side of the membrane. The chain crosses the membrane as a helical span at residues 57–77 (GLLGFVGTLLLPLCLATPLTV). At 78 to 98 (SLRALVAGASRAPPARVASAP) the chain is on the lumenal side. Residues 99-119 (WSWLLVGYGAAGLSWSLWAVL) traverse the membrane as a helical segment. Residues 120-148 (SPPGAQEKEQDQVNNKVLMWRLLKLSRPD) lie on the Cytoplasmic side of the membrane. The chain crosses the membrane as a helical span at residues 149–169 (LPLLVAAFFFLVLAVLGETLI). In terms of domain architecture, ABC transmembrane type-1 spans 152–435 (LVAAFFFLVL…LVYIYGDMLS (284 aa)). Topologically, residues 170-187 (PHYSGRVIDILGGDFDPH) are lumenal. A helical transmembrane segment spans residues 188 to 208 (AFASAIFFMCLFSFGSSLSAG). The Cytoplasmic segment spans residues 209–266 (CRGGCFTYTMSRINLRIREQLFSSLLRQDLGFFQETKTGELNSRLSSDTTLMSNWLPL). The chain crosses the membrane as a helical span at residues 267 to 287 (NANVLLRSLVKVVGLYGFMLS). Residues 288–293 (ISPRLT) lie on the Lumenal side of the membrane. Residues 294–314 (LLSLLHMPFTIAAEKVYNTRH) form a helical membrane-spanning segment. Residues 301 to 389 (PFTIAAEKVY…RRVLHLGVQM (89 aa)) form a part of the peptide-binding site region. Residues 315 to 374 (QEVLREIQDAVARAGQVVREAVGGLQTVRSFGAEEHEVCRYKEALEQCRQLYWRRDLERA) are Cytoplasmic-facing. The helical transmembrane segment at 375–395 (LYLLVRRVLHLGVQMLMLSCG) threads the bilayer. Topologically, residues 396 to 408 (LQQMQDGELTQGS) are lumenal. A helical transmembrane segment spans residues 409–429 (LLSFMIYQESVGSYVQTLVYI). The part of the peptide-binding site stretch occupies residues 414-433 (IYQESVGSYVQTLVYIYGDM). Over 430-686 (YGDMLSNVGA…EGKLQKLAQL (257 aa)) the chain is Cytoplasmic. One can recognise an ABC transporter domain in the interval 468–686 (VKFQDVSFAY…EGKLQKLAQL (219 aa)). An ATP-binding site is contributed by 503 to 510 (GPNGSGKS).

It belongs to the ABC transporter superfamily. ABCB family. MHC peptide exporter (TC 3.A.1.209) subfamily. Heterodimer of TAP1 and TAP2 (TAP1-TAP2). A component of the peptide loading complex (PLC), interacts via TAPBP with MHCI heterodimer; this interaction mediates peptide-MHCI assembly. Recruits TAPBP in a 1:1 stoichiometry. Interacts with classical MHCI such as HLA-A*02-B2M; this interaction is obligatory for the loading of peptide epitopes. Interacts with non-classical MHCI molecules including HLA-E-B2M and HLA-F-B2M as well as PLC component CALR before the peptide loading. As to quaternary structure, (Microbial infection) Interacts with Epstein-Barr virus BLNF2a. In terms of assembly, (Microbial infection) Interacts with herpes simplex virus US12/ICP47. (Microbial infection) Interacts with adenovirus E3-19K glycoprotein, which binds TAP1-TAP2 and acts as a TAPBP inhibitor, preventing TAP1-TAP2 association with MHCI. Requires Mg(2+) as cofactor.

It localises to the endoplasmic reticulum membrane. The enzyme catalyses a peptide antigen(in) + ATP + H2O = a peptide antigen(out) + ADP + phosphate + H(+). Its activity is regulated as follows. Inhibited at high ER lumenal peptide concentrations. With respect to regulation, (Microbial infection) Inhibited by herpes simplex virus US12/ICP47 protein, which blocks the peptide-binding site of TAP1-TAP2. (Microbial infection) Inhibited by human cytomegalovirus US6 glycoprotein, which binds to the lumenal side of TAP1-TAP2 complex and inhibits peptide translocation by specifically blocking ATP-binding and preventing TAP1-TAP2 conformational rearrangement induced by peptide binding. Functionally, ABC transporter associated with antigen processing. In complex with TAP1 mediates unidirectional translocation of peptide antigens from cytosol to endoplasmic reticulum (ER) for loading onto MHC class I (MHCI) molecules. Uses the chemical energy of ATP to export peptides against the concentration gradient. During the transport cycle alternates between 'inward-facing' state with peptide binding site facing the cytosol to 'outward-facing' state with peptide binding site facing the ER lumen. Peptide antigen binding to ATP-loaded TAP1-TAP2 induces a switch to hydrolysis-competent 'outward-facing' conformation ready for peptide loading onto nascent MHCI molecules. Subsequently ATP hydrolysis resets the transporter to the 'inward facing' state for a new cycle. Typically transports intracellular peptide antigens of 8 to 13 amino acids that arise from cytosolic proteolysis via IFNG-induced immunoproteasome. Binds peptides with free N- and C-termini, the first three and the C-terminal residues being critical. Preferentially selects peptides having a highly hydrophobic residue at position 3 and hydrophobic or charged residues at the C-terminal anchor. Proline at position 2 has the most destabilizing effect. As a component of the peptide loading complex (PLC), acts as a molecular scaffold essential for peptide-MHCI assembly and antigen presentation. The polypeptide is Antigen peptide transporter 2 (Homo sapiens (Human)).